A 365-amino-acid chain; its full sequence is Peptide chain release factor 2 (365 aa).

Glutamine 252 carries the post-translational modification N5-methylglutamine.

The protein belongs to the prokaryotic/mitochondrial release factor family. Post-translationally, methylated by PrmC. Methylation increases the termination efficiency of RF2.

The protein resides in the cytoplasm. Peptide chain release factor 2 directs the termination of translation in response to the peptide chain termination codons UGA and UAA. This is Peptide chain release factor 2 from Shewanella woodyi (strain ATCC 51908 / MS32).